The following is a 361-amino-acid chain: Chalcone synthase A (361 aa).

The active site involves Cys-168.

Belongs to the thiolase-like superfamily. Chalcone/stilbene synthases family.

It catalyses the reaction (E)-4-coumaroyl-CoA + 3 malonyl-CoA + 3 H(+) = 2',4,4',6'-tetrahydroxychalcone + 3 CO2 + 4 CoA. It functions in the pathway secondary metabolite biosynthesis; flavonoid biosynthesis. Its function is as follows. The primary product of this enzyme is 4,2',4',6'-tetrahydroxychalcone (also termed naringenin-chalcone or chalcone) which can under specific conditions spontaneously isomerize into naringenin. This Ipomoea cordatotriloba (Tievine) protein is Chalcone synthase A (CHSA).